Here is a 3859-residue protein sequence, read N- to C-terminus: MAFVATQGATVVDQTTLMKKYLQFVAALTDVNTPDETKLKMMQEVSENFENVTSSPQYSTFLEHIIPRFLTFLQDGEVQFLQEKPAQQLRKLVLEIIHRIPTNEHLRPHTKNVLSVMFRFLETENEENVLICLRIIIELHKQFRPPITQEIHHFLDFVKQIYKELPKVVNRYFENPQVIPENTVPPPEMVGMITTIAVKVNPEREDSETRTHSIIPRGSLSLKVLAELPIIVVLMYQLYKLNIHNVVAEFVPLIMNTIAIQVSAQARQHKLYNKELYADFIAAQIKTLSFLAYIIRIYQELVTKYSQQMVKGMLQLLSNCPAETAHLRKELLIAAKHILTTELRNQFIPCMDKLFDESILIGSGYTARETLRPLAYSTLADLVHHVRQHLPLSDLSLAVQLFAKNIDDESLPSSIQTMSCKLLLNLVDCIRSKSEQESGNGRDVLMRMLEVFVLKFHTIARYQLSAIFKKCKPQSELGAVEAALPGVPTAPAAPGPAPSPAPVPAPPPPPPPPPPATPVTPAPVPPFEKQGEKDKEDKQTFQVTDCRSLVKTLVCGVKTITWGITSCKAPGEAQFIPNKQLQPKETQIYIKLVKYAMQALDIYQVQIAGNGQTYIRVANCQTVRMKEEKEVLEHFAGVFTMMNPLTFKEIFQTTVPYMVERISKNYALQIVANSFLANPTTSALFATILVEYLLDRLPEMGSNVELSNLYLKLFKLVFGSVSLFAAENEQMLKPHLHKIVNSSMELAQTAKEPYNYFLLLRALFRSIGGGSHDLLYQEFLPLLPNLLQGLNMLQSGLHKQHMKDLFVELCLTVPVRLSSLLPYLPMLMDPLVSALNGSQTLVSQGLRTLELCVDNLQPDFLYDHIQPVRAELMQALWRTLRNPADSISHVAYRVLGKFGGSNRKMLKESQKLHYVVTEVQGPSITVEFSDCKASLQLPMEKAIETALDCLKSANTEPYYRRQAWEVIKCFLVAMMSLEDNKHALYQLLAHPNFTEKTIPNVIISHRYKAQDTPARKTFEQALTGAFMSAVIKDLRPSALPFVASLIRHYTMVAVAQQCGPFLLPCYQVGSQPSTAMFHSEENGSKGMDPLVLIDAIAICMAYEEKELCKIGEVALAVIFDVASIILGSKERACQLPLFSYIVERLCACCYEQAWYAKLGGVVSIKFLMERLPLTWVLQNQQTFLKALLFVMMDLTGEVSNGAVAMAKTTLEQLLMRCATPLKDEERAEEIVAAQEKSFHHVTHDLVREVTSPNSTVRKQAMHSLQVLAQVTGKSVTVIMEPHKEVLQDMVPPKKHLLRHQPANAQIGLMEGNTFCTTLQPRLFTMDLNVVEHKVFYTELLNLCEAEDSALTKLPCYKSLPSLVPLRIAALNALAACNYLPQSREKIIAALFKALNSTNSELQEAGEACMRKFLEGATIEVDQIHTHMRPLLMMLGDYRSLTLNVVNRLTSVTRLFPNSFNDKFCDQMMQHLRKWMEVVVITHKGGQRSDGNESISECGRCPLSPFCQFEEMKICSAIINLFHLIPAAPQTLVKPLLEVVMKTERAMLIEAGSPFREPLIKFLTRHPSQTVELFMMEATLNDPQWSRMFMSFLKHKDARPLRDVLAANPNRFITLLLPGGAQTAVRPGSPSTSTMRLDLQFQAIKIISIIVKNDDSWLASQHSLVSQLRRVWVSENFQERHRKENMAATNWKEPKLLAYCLLNYCKRNYGDIELLFQLLRAFTGRFLCNMTFLKEYMEEEIPKNYSIAQKRALFFRFVDFNDPNFGDELKAKVLQHILNPAFLYSFEKGEGEQLLGPPNPEGDNPESITSVFITKVLDPEKQADMLDSLRIYLLQYATLLVEHAPHHIHDNNKNRNSKLRRLMTFAWPCLLSKACVDPACKYSGHLLLAHIIAKFAIHKKIVLQVFHSLLKAHAMEARAIVRQAMAILTPAVPARMEDGHQMLTHWTRKIIVEEGHTVPQLVHILHLIVQHFKVYYPVRHHLVQHMVSAMQRLGFTPSVTIEQRRLAVDLSEVVIKWELQRIKDQQPDSDMDPNSSGEGVNSVSSSIKRGLSVDSAQEVKRFRTATGAISAVFGRSQSLPGADSLLAKPIDKQHTDTVVNFLIRVACQVNDNTNTAGSPGEVLSRRCVNLLKTALRPDMWPKSELKLQWFDKLLMTVEQPNQVNYGNICTGLEVLSFLLTVLQSPAILSSFKPLQRGIAACMTCGNTKVLRAVHSLLSRLMSIFPTEPSTSSVASKYEELECLYAAVGKVIYEGLTNYEKATNANPSQLFGTLMILKSACSNNPSYIDRLISVFMRSLQKMVREHLNPQAASGSTEATSGTSELVMLSLELVKTRLAVMSMEMRKNFIQAILTSLIEKSPDAKILRAVVKIVEEWVKNNSPMAANQTPTLREKSILLVKMMTYIEKRFPEDLELNAQFLDLVNYVYRDETLSGSELTAKLEPAFLSGLRCAQPLIRAKFFEVFDNSMKRRVYERLLYVTCSQNWEAMGNHFWIKQCIELLLAVCEKSTPIGTSCQGAMLPSITNVINLADSHDRAAFAMVTHVKQEPRERENSESKEEDVEIDIELAPGDQTSTPKTKELSEKDIGNQLHMLTNRHDKFLDTLREVKTGALLSAFVQLCHISTTLAEKTWVQLFPRLWKILSDRQQHALAGEISPFLCSGSHQVQRDCQPSALNCFVEAMSQCVPPIPIRPCVLKYLGKTHNLWFRSTLMLEHQAFEKGLSLQIKPKQTTEFYEQESITPPQQEILDSLAELYSLLQEEDMWAGLWQKRCKYSETATAIAYEQHGFFEQAQESYEKAMDKAKKEHERSNASPAIFPEYQLWEDHWIRCSKELNQWEALTEYGQSKGHINPYLVLECAWRVSNWTAMKEALVQVEVSCPKEMAWKVNMYRGYLAICHPEEQQLSFIERLVEMASSLAIREWRRLPHVVSHVHTPLLQAAQQIIELQEAAQINAGLQPTNLGRNNSLHDMKTVVKTWRNRLPIVSDDLSHWSSIFMWRQHHYQGKPTWSGMHSSSIVTAYENSSQHDPSSNNAMLGVHASASAIIQYGKIARKQGLVNVALDILSRIHTIPTVPIVDCFQKIRQQVKCYLQLAGVMGKNECMQGLEVIESTNLKYFTKEMTAEFYALKGMFLAQINKSEEANKAFSAAVQMHDVLVKAWAMWGDYLENIFVKERQLHLGVSAITCYLHACRHQNESKSRKYLAKVLWLLSFDDDKNTLADAVDKYCIGVPPIQWLAWIPQLLTCLVGSEGKLLLNLISQVGRVYPQAVYFPIRTLYLTLKIEQRERYKSDPGPIRATAPMWRCSRIMHMQRELHPTLLSSLEGIVDQMVWFRENWHEEVLRQLQQGLAKCYSVAFEKSGAVSDAKITPHTLNFVKKLVSTFGVGLENVSNVSTMFSSAASESLARRAQATAQDPVFQKLKGQFTTDFDFSVPGSMKLHNLISKLKKWIKILEAKTKQLPKFFLIEEKCRFLSNFSAQTAEVEIPGEFLMPKPTHYYIKIARFMPRVEIVQKHNTAARRLYIRGHNGKIYPYLVMNDACLTESRREERVLQLLRLLNPCLEKRKETTKRHLFFTVPRVVAVSPQMRLVEDNPSSLSLVEIYKQRCAKKGIEHDNPISRYYDRLATVQARGTQASHQVLRDILKEVQSNMVPRSMLKEWALHTFPNATDYWTFRKMFTIQLALIGFAEFVLHLNRLNPEMLQIAQDTGKLNVAYFRFDINDATGDLDANRPVPFRLTPNISEFLTTIGVSGPLTASMIAVARCFAQPNFKVDGILKTVLRDEIIAWHKKTQEDTSSPLSAAGQPENMDSQQLVSLVQKAVTAIMTRLHNLAQFEGGESKVNTLVAAANSLDNLCRMDPAWHPWL.

Residue A2 is modified to N-acetylalanine. A compositionally biased stretch (pro residues) spans 491–526; the sequence is PAAPGPAPSPAPVPAPPPPPPPPPPATPVTPAPVPP. The disordered stretch occupies residues 491–541; that stretch reads PAAPGPAPSPAPVPAPPPPPPPPPPATPVTPAPVPPFEKQGEKDKEDKQTF. The span at 529–539 shows a compositional bias: basic and acidic residues; that stretch reads KQGEKDKEDKQ. S1628 carries the phosphoserine modification. Positions 2010-2388 are interaction with TP53; the sequence is SEVVIKWELQ…SPMAANQTPT (379 aa). Residues 2023-2044 are disordered; that stretch reads DQQPDSDMDPNSSGEGVNSVSS. Residues 2033–2044 show a composition bias toward low complexity; sequence NSSGEGVNSVSS. The Bipartite nuclear localization signal signature appears at 2047–2062; the sequence is KRGLSVDSAQEVKRFR. S2051 and S2077 each carry phosphoserine. K2543 participates in a covalent cross-link: Glycyl lysine isopeptide (Lys-Gly) (interchain with G-Cter in SUMO2). A compositionally biased stretch (basic and acidic residues) spans 2543-2554; it reads KQEPRERENSES. The interval 2543–2578 is disordered; that stretch reads KQEPRERENSESKEEDVEIDIELAPGDQTSTPKTKE. One can recognise an FAT domain in the interval 2692–3275; that stretch reads VLKYLGKTHN…YFPIRTLYLT (584 aa). K3078 is subject to N6-acetyllysine. The region spanning 3500 to 3823 is the PI3K/PI4K catalytic domain; the sequence is MPRVEIVQKH…AVTAIMTRLH (324 aa). The tract at residues 3506–3512 is G-loop; the sequence is VQKHNTA. A catalytic loop region spans residues 3687–3695; the sequence is HLNRLNPEM. The tract at residues 3707 to 3732 is activation loop; that stretch reads VAYFRFDINDATGDLDANRPVPFRLT. The FATC domain maps to 3827–3859; it reads QFEGGESKVNTLVAAANSLDNLCRMDPAWHPWL.

It belongs to the PI3/PI4-kinase family. TRA1 subfamily. As to quaternary structure, interacts with MYC, E2F1 and E2F4 transcription factors. Interacts directly with p53/TP53. Interacts with GCN5L2. Component of various HAT complexes. Component of the PCAF complex, at least composed of TADA2L/ADA2, SUPT3H, TADA3L/ADA3, TAF5L/PAF65-beta, TAF6L/PAF65-alpha, TAF10/TAFII30, TAF12/TAFII20, TAF9/TAFII31 and TRRAP. Component of the TFTC-HAT complex, at least composed of TAF5L, TAF6L, TADA3L, SUPT3H/SPT3, TAF2/TAFII150, TAF4/TAFII135, TAF5/TAFII100, GCN5L2/GCN5, TAF10 and TRRAP. Component of the NuA4 histone acetyltransferase complex which contains the catalytic subunit KAT5/TIP60 and the subunits EP400, TRRAP/PAF400, BRD8/SMAP, EPC1, DMAP1/DNMAP1, RUVBL1/TIP49, RUVBL2, ING3, actin, ACTL6A/BAF53A, MORF4L1/MRG15, MORF4L2/MRGX, MRGBP, YEATS4/GAS41, VPS72/YL1 and MEAF6. Component of the STAGA complex, at least composed of SUPT3H, GCN5L2, SUPT7L, TAF5L, TAF6L, TADA3L, TAD1L, TAF10, TAF12, TRRAP and TAF9. The STAGA core complex is associated with a subcomplex required for histone deubiquitination composed of ATXN7L3, ENY2 and USP22. Component of the BAF53 complex, at least composed of BAF53A, RUVBL1, SMARCA4/BRG1, and TRRAP, which preferentially acetylates histone H4 (and H2A) within nucleosomes. Interacts with NPAT. Interaction with TELO2 and TTI1. Component of a SWR1-like complex.

It is found in the nucleus. Its function is as follows. Adapter protein, which is found in various multiprotein chromatin complexes with histone acetyltransferase activity (HAT), which gives a specific tag for epigenetic transcription activation. Component of the NuA4 histone acetyltransferase complex which is responsible for acetylation of nucleosomal histones H4 and H2A. Plays a central role in MYC transcription activation, and also participates in cell transformation by MYC. Required for p53/TP53-, E2F1- and E2F4-mediated transcription activation. Also involved in transcription activation mediated by the adenovirus E1A, a viral oncoprotein that deregulates transcription of key genes. Probably acts by linking transcription factors such as E1A, MYC or E2F1 to HAT complexes such as STAGA thereby allowing transcription activation. Probably not required in the steps following histone acetylation in processes of transcription activation. May be required for the mitotic checkpoint and normal cell cycle progression. Component of a SWR1-like complex that specifically mediates the removal of histone H2A.Z/H2AZ1 from the nucleosome. May play a role in the formation and maintenance of the auditory system. The polypeptide is Transformation/transcription domain-associated protein (TRRAP) (Homo sapiens (Human)).